A 408-amino-acid polypeptide reads, in one-letter code: Imidazolonepropionase (408 aa).

Residues histidine 73 and histidine 75 each coordinate Fe(3+). Zn(2+) contacts are provided by histidine 73 and histidine 75. Arginine 82, tyrosine 145, and histidine 178 together coordinate 4-imidazolone-5-propanoate. Tyrosine 145 contacts N-formimidoyl-L-glutamate. Residue histidine 243 participates in Fe(3+) binding. A Zn(2+)-binding site is contributed by histidine 243. Glutamine 246 contacts 4-imidazolone-5-propanoate. Aspartate 318 contributes to the Fe(3+) binding site. Position 318 (aspartate 318) interacts with Zn(2+). Positions 320 and 322 each coordinate N-formimidoyl-L-glutamate. Serine 323 is a binding site for 4-imidazolone-5-propanoate.

The protein belongs to the metallo-dependent hydrolases superfamily. HutI family. It depends on Zn(2+) as a cofactor. Fe(3+) serves as cofactor.

Its subcellular location is the cytoplasm. It carries out the reaction 4-imidazolone-5-propanoate + H2O = N-formimidoyl-L-glutamate. It functions in the pathway amino-acid degradation; L-histidine degradation into L-glutamate; N-formimidoyl-L-glutamate from L-histidine: step 3/3. Functionally, catalyzes the hydrolytic cleavage of the carbon-nitrogen bond in imidazolone-5-propanoate to yield N-formimidoyl-L-glutamate. It is the third step in the universal histidine degradation pathway. This chain is Imidazolonepropionase, found in Shewanella sediminis (strain HAW-EB3).